The following is a 485-amino-acid chain: Cobyric acid synthase (485 aa).

One can recognise a GATase cobBQ-type domain in the interval 250-448 (TQTVAVIAYP…LHGMFEDPRV (199 aa)). Catalysis depends on Cys334, which acts as the Nucleophile. The active site involves His440.

Belongs to the CobB/CobQ family. CobQ subfamily.

It functions in the pathway cofactor biosynthesis; adenosylcobalamin biosynthesis. Catalyzes amidations at positions B, D, E, and G on adenosylcobyrinic A,C-diamide. NH(2) groups are provided by glutamine, and one molecule of ATP is hydrogenolyzed for each amidation. This is Cobyric acid synthase from Polaromonas naphthalenivorans (strain CJ2).